The sequence spans 307 residues: MKSKKGLTLTITLGTLALFLSGCVQTTKAGKPYGFVYEYLAKPGQNVMEWLSQLFGNNYGWAIIGLTVIVRLVLLPMMINQQRKSTYQQEKMSAVRPQMEKIQARQKAATTQEEKAAISNELMQLYRDNGISMTGGIGCLPLLIQLPIFSALYYAIRYSPELSKATFMGISLGKSSLILAILAFLSYLAQGYLSMIGLPEEQKKTMRLMLIMSPVMILFVSMSAPAGLGLYFFVGGLFACLQTLIINFFRPRIRREVEAELKKHPIKTPTPTQPKPINATESKPSHPRPQNNAGRGRNAGKQQRHHK.

Positions 1-22 (MKSKKGLTLTITLGTLALFLSG) are cleaved as a signal peptide. Cys-23 carries the N-palmitoyl cysteine lipid modification. A lipid anchor (S-diacylglycerol cysteine) is attached at Cys-23. Transmembrane regions (helical) follow at residues 59–79 (YGWAIIGLTVIVRLVLLPMMI), 136–156 (GIGCLPLLIQLPIFSALYYAI), 177–197 (LILAILAFLSYLAQGYLSMIG), 205–225 (TMRLMLIMSPVMILFVSMSAP), and 226–246 (AGLGLYFFVGGLFACLQTLII). Residues 260–307 (ELKKHPIKTPTPTQPKPINATESKPSHPRPQNNAGRGRNAGKQQRHHK) are disordered.

This sequence belongs to the OXA1/ALB3/YidC family. Type 2 subfamily.

It localises to the cell membrane. Functionally, required for the insertion and/or proper folding and/or complex formation of integral membrane proteins into the membrane. Involved in integration of membrane proteins that insert both dependently and independently of the Sec translocase complex, as well as at least some lipoproteins. In Lactiplantibacillus plantarum (strain ATCC BAA-793 / NCIMB 8826 / WCFS1) (Lactobacillus plantarum), this protein is Membrane protein insertase YidC 1.